We begin with the raw amino-acid sequence, 82 residues long: Small ribosomal subunit protein uS17 (82 aa).

It belongs to the universal ribosomal protein uS17 family. As to quaternary structure, part of the 30S ribosomal subunit.

Its function is as follows. One of the primary rRNA binding proteins, it binds specifically to the 5'-end of 16S ribosomal RNA. The polypeptide is Small ribosomal subunit protein uS17 (Shewanella halifaxensis (strain HAW-EB4)).